We begin with the raw amino-acid sequence, 227 residues long: UMP-CMP kinase (227 aa).

35 to 40 (GAGKGT) contacts ATP. The tract at residues 55 to 85 (SAGDLLRAEQHREGSEYGQLIQTCIKEGSIV) is NMP. Residues Arg61, 83–85 (SIV), 122–125 (GFPR), and Gln129 contribute to the a ribonucleoside 5'-phosphate site. The tract at residues 159–169 (ERGKTSGREDD) is LID. Residue Arg160 participates in ATP binding. The a ribonucleoside 5'-phosphate site is built by Arg166 and Arg177. Val205 provides a ligand contact to ATP.

It belongs to the adenylate kinase family. UMP-CMP kinase subfamily. Monomer. It depends on Mg(2+) as a cofactor.

It localises to the cytoplasm. The protein localises to the nucleus. The enzyme catalyses UMP + ATP = UDP + ADP. In terms of biological role, catalyzes the phosphorylation of pyrimidine nucleoside monophosphates at the expense of ATP. Plays an important role in de novo pyrimidine nucleotide biosynthesis. Has preference for UMP and CMP as phosphate acceptors, but can also use AMP and dCMP to a lesser extent. May play a role during the formation of basidiospores in the gill tissue. The sequence is that of UMP-CMP kinase (uck1) from Lentinula edodes (Shiitake mushroom).